The primary structure comprises 465 residues: Solute carrier family 7 member 12 (465 aa).

The Cytoplasmic segment spans residues 1-6 (MQLLRA). Residues 7-27 (LGVFHVSMILFSATLGTGIFV) traverse the membrane as a helical segment. Topologically, residues 28-39 (TPKAVLKYSSLN) are extracellular. A helical membrane pass occupies residues 40-60 (IPVSLSIWAGCGLLSIMSALC). At 61 to 81 (NAEIATTYPLSGASYYFLKRT) the chain is on the cytoplasmic side. Residues 82–102 (LGSSVAFLSLWIKLFAHFLGI) form a helical membrane-spanning segment. Over 103–132 (GAQCLLIATSVIQCFYSGCPAPELPTKCLA) the chain is Extracellular. The helical transmembrane segment at 133–153 (LAILWSFGIVSARGIKTVAWF) threads the bilayer. Residue N154 is a topological domain, cytoplasmic. Residues 155 to 175 (TVSSFIKLSVLCLISLTVLLV) traverse the membrane as a helical segment. The Extracellular segment spans residues 176-202 (NGKKENVSRFENALDAELPNASQIADA). Residues 203-223 (ILQVSYSYLGSSVLIVIAGEI) traverse the membrane as a helical segment. The Cytoplasmic segment spans residues 224–234 (KRPTETIPKTL). A helical transmembrane segment spans residues 235–255 (IYGISIVTVLYLLTNISYLAV). Over 256-280 (LTSQEIIFSDSVGVTWMNRVFPSIQ) the chain is Extracellular. The chain crosses the membrane as a helical span at residues 281-301 (WISSFLISAFLLGSVSCGIVS). Over 302-327 (ASRVFYSASQEGEFPSIYSMLNDHHS) the chain is Cytoplasmic. A helical transmembrane segment spans residues 328-351 (PAVADIQIVILSSVAIISSSIIYL). Residues 352 to 356 (VKYVS) lie on the Extracellular side of the membrane. The helical transmembrane segment at 357-375 (LGSFCINLLQMIGLLKIRY) threads the bilayer. The Cytoplasmic portion of the chain corresponds to 376 to 386 (QNPDIPRPYKV). A helical transmembrane segment spans residues 387–407 (WLPFIFGSIALSLFLIFTPVI). At 408–409 (QS) the chain is on the extracellular side. A helical membrane pass occupies residues 410-430 (PSIEHVYQVVFLFCGFLCYWL). Residues 431–465 (QANLNGHATCFDTITCYCQLLFNISPSEDPEEQKN) lie on the Cytoplasmic side of the membrane.

Belongs to the amino acid-polyamine-organocation (APC) superfamily. As to quaternary structure, probably forms multimers, perhaps with an unknown protein(s). In terms of tissue distribution, expressed in kidney and red blood cells (at protein level). Expressed in kidney along the collecting ducts in the cortex, outer and inner medulla. May be expressed in placenta, lungs, spleen and skeletal muscles.

The protein localises to the apical cell membrane. Its subcellular location is the basal cell membrane. The protein resides in the cytoplasm. In terms of biological role, probably mediates sodium- and chloride-independent uptake of neutral amino acids. This Mus musculus (Mouse) protein is Solute carrier family 7 member 12.